Here is a 274-residue protein sequence, read N- to C-terminus: 2,3,4,5-tetrahydropyridine-2,6-dicarboxylate N-succinyltransferase (274 aa).

Substrate-binding residues include arginine 103 and aspartate 140.

Belongs to the transferase hexapeptide repeat family. In terms of assembly, homotrimer.

The protein resides in the cytoplasm. The enzyme catalyses (S)-2,3,4,5-tetrahydrodipicolinate + succinyl-CoA + H2O = (S)-2-succinylamino-6-oxoheptanedioate + CoA. It participates in amino-acid biosynthesis; L-lysine biosynthesis via DAP pathway; LL-2,6-diaminopimelate from (S)-tetrahydrodipicolinate (succinylase route): step 1/3. The polypeptide is 2,3,4,5-tetrahydropyridine-2,6-dicarboxylate N-succinyltransferase (Pasteurella multocida (strain Pm70)).